Consider the following 1225-residue polypeptide: NHS-like protein 2 (1225 aa).

Disordered regions lie at residues 161–180 (TFRS…PQSA), 193–213 (QLSE…SLSL), 291–371 (NFSQ…ESMG), 466–510 (HMPE…TTDV), 543–632 (LSAQ…PEST), 670–766 (QGSS…KFPK), 812–1009 (KTNP…KKPS), 1042–1093 (DTKC…DKTA), and 1128–1203 (KEPG…KTTN). Polar residues-rich tracts occupy residues 291-315 (NFSQ…TSDI) and 339-350 (SLTSPVLRTPSS). S500 bears the Phosphoserine mark. Basic residues predominate over residues 552–568 (RRQRSKSISLRKAKKKP). Phosphoserine is present on S576. Residues 675 to 688 (SLASPSTSRATTPS) show a composition bias toward low complexity. S691 carries the post-translational modification Phosphoserine. Composition is skewed to polar residues over residues 710 to 730 (SPSS…SMSL) and 812 to 827 (KTNP…TQSD). Acidic residues predominate over residues 841 to 851 (PEDDIESPEYA). Over residues 852 to 867 (EEPRAEEVFTLPERKT) the composition is skewed to basic and acidic residues. 2 stretches are compositionally biased toward polar residues: residues 939-968 (GEST…QPPQ) and 1054-1065 (SLGQRVTSTPQA). S1054 is modified (phosphoserine). Over residues 1082-1093 (TEEKSLISDKTA) the composition is skewed to basic and acidic residues. Residues 1138–1155 (RTSSHSPIKNTAESPISE) are compositionally biased toward polar residues. A compositionally biased stretch (low complexity) spans 1156 to 1166 (STATAGSGSSA).

It belongs to the NHS family.

The sequence is that of NHS-like protein 2 from Homo sapiens (Human).